Here is a 174-residue protein sequence, read N- to C-terminus: Gamma-crystallin A (174 aa).

2 consecutive Beta/gamma crystallin 'Greek key' domains span residues 2–40 (GKITFYEDRGFQGRCYECSSDCPNLQTYFSRCNSIRVDS) and 41–83 (GCWM…RSIP). Residues 84-87 (YTSS) are connecting peptide. Beta/gamma crystallin 'Greek key' domains are found at residues 88 to 128 (HRIR…HVLE) and 129 to 171 (GSWV…RRVM).

The protein belongs to the beta/gamma-crystallin family.

In terms of biological role, crystallins are the dominant structural components of the vertebrate eye lens. The protein is Gamma-crystallin A (Cryga) of Rattus norvegicus (Rat).